A 780-amino-acid chain; its full sequence is ATP-dependent 6-phosphofructokinase, liver type (780 aa).

At Ala-2 the chain carries N-acetylalanine. The interval 2 to 390 (AAVDLEKLRA…NWNIYKLLAH (389 aa)) is N-terminal catalytic PFK domain 1. Residues Gly-25, 88–89 (RC), and 118–121 (GDGS) contribute to the ATP site. Residue Asp-119 coordinates Mg(2+). Substrate contacts are provided by residues 164–166 (SID), Arg-201, 208–210 (MGR), Glu-264, Arg-292, and 298–301 (HVQR). Residue Asp-166 is the Proton acceptor of the active site. Ser-377 is subject to Phosphoserine. Residues 391–400 (QKPPKEKSNF) form an interdomain linker region. The interval 401-780 (SLAILNVGAP…RRTLSMDKGF (380 aa)) is C-terminal regulatory PFK domain 2. Beta-D-fructose 2,6-bisphosphate is bound by residues Arg-470, 527 to 531 (TISNN), Arg-565, 572 to 574 (MGG), and Glu-628. O-linked (GlcNAc) serine glycosylation occurs at Ser-529. Position 640 is a phosphotyrosine (Tyr-640). Beta-D-fructose 2,6-bisphosphate is bound by residues Arg-654, 660-663 (HLQQ), and Arg-734. The residue at position 775 (Ser-775) is a Phosphoserine.

It belongs to the phosphofructokinase type A (PFKA) family. ATP-dependent PFK group I subfamily. Eukaryotic two domain clade 'E' sub-subfamily. As to quaternary structure, homo- and heterotetramers. Phosphofructokinase (PFK) enzyme functions as a tetramer composed of different combinations of 3 types of subunits, called PFKM (M), PFKL (L) and PFKP (P). The composition of the PFK tetramer differs according to the tissue type it is present in. The kinetic and regulatory properties of the tetrameric enzyme are dependent on the subunit composition, hence can vary across tissues. The cofactor is Mg(2+). In terms of processing, glcNAcylation at Ser-529 by OGT decreases enzyme activity, leading to redirect glucose flux through the oxidative pentose phosphate pathway. Glycosylation is stimulated by both hypoxia and glucose deprivation.

It is found in the cytoplasm. The enzyme catalyses beta-D-fructose 6-phosphate + ATP = beta-D-fructose 1,6-bisphosphate + ADP + H(+). It participates in carbohydrate degradation; glycolysis; D-glyceraldehyde 3-phosphate and glycerone phosphate from D-glucose: step 3/4. Its activity is regulated as follows. Allosterically activated by ADP, AMP, or fructose 2,6-bisphosphate, and allosterically inhibited by ATP or citrate. GlcNAcylation by OGT overcomes allosteric regulation. In terms of biological role, catalyzes the phosphorylation of D-fructose 6-phosphate to fructose 1,6-bisphosphate by ATP, the first committing step of glycolysis. Negatively regulates the phagocyte oxidative burst in response to bacterial infection by controlling cellular NADPH biosynthesis and NADPH oxidase-derived reactive oxygen species. Upon macrophage activation, drives the metabolic switch toward glycolysis, thus preventing glucose turnover that produces NADPH via pentose phosphate pathway. This Pongo abelii (Sumatran orangutan) protein is ATP-dependent 6-phosphofructokinase, liver type (PFKL).